The primary structure comprises 141 residues: Large ribosomal subunit protein uL16 (141 aa).

Residues 1–19 (MLMPKKTKYRKQQKGRNRG) are compositionally biased toward basic residues. The tract at residues 1 to 22 (MLMPKKTKYRKQQKGRNRGKAY) is disordered.

Belongs to the universal ribosomal protein uL16 family. Part of the 50S ribosomal subunit.

Its function is as follows. Binds 23S rRNA and is also seen to make contacts with the A and possibly P site tRNAs. In Nitratiruptor sp. (strain SB155-2), this protein is Large ribosomal subunit protein uL16.